Reading from the N-terminus, the 342-residue chain is Nucleoid-associated protein Shewmr4_2217 (342 aa).

Belongs to the YejK family.

The protein resides in the cytoplasm. The protein localises to the nucleoid. In Shewanella sp. (strain MR-4), this protein is Nucleoid-associated protein Shewmr4_2217.